The sequence spans 1572 residues: Dynein axonemal assembly factor 8 (1572 aa).

Disordered stretches follow at residues 1-21 (MASE…NWSG), 262-304 (SEEV…HPQS), 324-428 (SLEQ…EILQ), and 849-871 (FQNP…SDSE). Positions 324-335 (SLEQNPENPSQR) are enriched in polar residues. Over residues 336-351 (NEQKEKHHLNKTDHTG) the composition is skewed to basic and acidic residues. A compositionally biased stretch (polar residues) spans 361–374 (NIQNDSLSDANMSN). The span at 409 to 426 (VGREEKDGREEQEKEKEI) shows a compositional bias: basic and acidic residues. The span at 849–865 (FQNPYSRSTQPRSANLR) shows a compositional bias: polar residues. Positions 1249–1382 (TVLLLKPRIW…IRDIKTFFPE (134 aa)) are NDK.

Interacts with DNAI2. As to expression, expression is enriched in multiciliated cells in the epidermis and the nephrostomes of the pronephros.

It localises to the dynein axonemal particle. It is found in the cytoplasm. Its function is as follows. In cyliated cells, dynein axonemal particle-specific protein required for deployment of ODA to the axoneme. Interacts with outer dynein arm (ODA) subunits. The protein is Dynein axonemal assembly factor 8 (dnaaf8) of Xenopus laevis (African clawed frog).